A 144-amino-acid chain; its full sequence is Nucleoside diphosphate kinase (144 aa).

ATP-binding residues include Lys-11, Phe-59, Arg-87, Thr-93, Arg-104, and Asn-114. The Pros-phosphohistidine intermediate role is filled by His-117.

The protein belongs to the NDK family. Homotetramer. Mg(2+) is required as a cofactor.

It localises to the cytoplasm. The enzyme catalyses a 2'-deoxyribonucleoside 5'-diphosphate + ATP = a 2'-deoxyribonucleoside 5'-triphosphate + ADP. The catalysed reaction is a ribonucleoside 5'-diphosphate + ATP = a ribonucleoside 5'-triphosphate + ADP. Its function is as follows. Major role in the synthesis of nucleoside triphosphates other than ATP. The ATP gamma phosphate is transferred to the NDP beta phosphate via a ping-pong mechanism, using a phosphorylated active-site intermediate. This Vibrio atlanticus (strain LGP32) (Vibrio splendidus (strain Mel32)) protein is Nucleoside diphosphate kinase.